Reading from the N-terminus, the 398-residue chain is GATA transcription factor 21 (398 aa).

Residues 20–51 are disordered; sequence QPFFYPLGSSSSLHHHHHHHHHQVPSNSSSSS. Basic residues predominate over residues 32-42; it reads LHHHHHHHHHQ. Residues 109-116 carry the Nuclear localization signal motif; sequence PKKETRLK. Positions 122–144 are disordered; sequence KDHEDQPHPLHQNPTKPDSDSDK. The GATA-type zinc finger occupies 226-280; it reads NGVIRVCSDCNTTKTPLWRSGPRGPKSLCNACGIRQRKARRAAMAAAAAAGDQEV. A disordered region spans residues 289-353; that stretch reads LPLKKKLQNK…KSTTSSNSSI (65 aa). Positions 291 to 302 are enriched in basic residues; that stretch reads LKKKLQNKKKRS. Low complexity predominate over residues 343-353; sequence SKSTTSSNSSI.

The protein belongs to the type IV zinc-finger family. Class B subfamily. As to quaternary structure, interacts with SNL1. Forms heterodimers with GATA18. In terms of tissue distribution, expressed predominantly in leaves, and barely in stems, flowers and siliques.

The protein resides in the nucleus. Functionally, transcriptional regulator that specifically binds 5'-GATA-3' or 5'-GAT-3' motifs within gene promoters. Involved in the modulation of chloroplast development, growth and division in a cytokinin-dependent manner. Repressor of the gibberellic acid (GA) signaling pathway that represses flowering and modulates greening, in a SOC1-dependent manner. Prevents the accumulation of SOC1 during flowering. Promotes chlorophyll biosynthesis throughout the plant, by regulating chlorophyll biosynthetic genes (e.g. HEMA1 and GUN4) and chloroplast localized glutamate synthase (e.g. GLU1). Involved in the regulation of sugar-sensing genes (e.g. HXK1, HXK2, STP13 and PLT6). Regulator of germination, senescence, elongation growth and flowering time. Also influences leaf starch content. This is GATA transcription factor 21 from Arabidopsis thaliana (Mouse-ear cress).